Here is a 502-residue protein sequence, read N- to C-terminus: Cytochrome P450 monooxygenase verC (502 aa).

Residues 9 to 29 form a helical membrane-spanning segment; sequence IAALPMVSLLGAALIVVSVLG. N124, N190, N271, and N342 each carry an N-linked (GlcNAc...) asparagine glycan. C444 lines the heme pocket.

Belongs to the cytochrome P450 family. Heme is required as a cofactor.

It is found in the membrane. Its pathway is mycotoxin biosynthesis. Cytochrome P450 monooxygenase; part of the gene cluster that mediates the biosynthesis of 11'-deoxyverticillin A, one of the dimeric epipolythiodioxopiperazines (ETPs) from the verticillin family that act as mycotoxins. 11'-deoxyverticillin A is required for normal conidiation. The nonribosomal peptide synthetase verP is speculated to be responsible for condensation of amino acids to form the carbon skeleton of verticillin, whereas the cluster-specific tailoring enzymes are involved in further modifications leading to the production of 11'-deoxyverticillin A. The protein is Cytochrome P450 monooxygenase verC of Clonostachys rogersoniana.